A 66-amino-acid chain; its full sequence is Prokaryotic ubiquitin-like protein Pup (66 aa).

The segment covering 1–10 (MAGQEQQSSS) has biased composition (low complexity). The disordered stretch occupies residues 1-39 (MAGQEQQSSSPREEEHEVADAPVPVPSSPQASAHTDGVD). The ARC ATPase binding stretch occupies residues 23–60 (VPVPSSPQASAHTDGVDDLLDEIDGVLESNAEEFVRGF). Position 66 is a deamidated glutamine (glutamine 66). Glutamine 66 is covalently cross-linked (Isoglutamyl lysine isopeptide (Gln-Lys) (interchain with K-? in acceptor proteins)).

This sequence belongs to the prokaryotic ubiquitin-like protein family. As to quaternary structure, strongly interacts with the proteasome-associated ATPase ARC through a hydrophobic interface; the interacting region of Pup lies in its C-terminal half. There is one Pup binding site per ARC hexamer ring. Post-translationally, is modified by deamidation of its C-terminal glutamine to glutamate by the deamidase Dop, a prerequisite to the subsequent pupylation process.

The protein operates within protein degradation; proteasomal Pup-dependent pathway. In terms of biological role, protein modifier that is covalently attached to lysine residues of substrate proteins, thereby targeting them for proteasomal degradation. The tagging system is termed pupylation. The sequence is that of Prokaryotic ubiquitin-like protein Pup from Renibacterium salmoninarum (strain ATCC 33209 / DSM 20767 / JCM 11484 / NBRC 15589 / NCIMB 2235).